Consider the following 268-residue polypeptide: Small ribosomal subunit protein eS1 (268 aa).

Positions M1–V21 are disordered.

Belongs to the eukaryotic ribosomal protein eS1 family. As to quaternary structure, component of the small ribosomal subunit. Mature ribosomes consist of a small (40S) and a large (60S) subunit. The 40S subunit contains about 33 different proteins and 1 molecule of RNA (18S). The 60S subunit contains about 49 different proteins and 3 molecules of RNA (28S, 5.8S and 5S).

It is found in the cytoplasm. Functionally, essential for oogenesis; required for late follicle cell development. This is Small ribosomal subunit protein eS1 from Drosophila persimilis (Fruit fly).